Consider the following 173-residue polypeptide: Crossover junction endodeoxyribonuclease RuvC (173 aa).

Catalysis depends on residues aspartate 8, glutamate 67, and aspartate 139. Positions 8, 67, and 139 each coordinate Mg(2+).

Belongs to the RuvC family. Homodimer which binds Holliday junction (HJ) DNA. The HJ becomes 2-fold symmetrical on binding to RuvC with unstacked arms; it has a different conformation from HJ DNA in complex with RuvA. In the full resolvosome a probable DNA-RuvA(4)-RuvB(12)-RuvC(2) complex forms which resolves the HJ. The cofactor is Mg(2+).

Its subcellular location is the cytoplasm. The enzyme catalyses Endonucleolytic cleavage at a junction such as a reciprocal single-stranded crossover between two homologous DNA duplexes (Holliday junction).. The RuvA-RuvB-RuvC complex processes Holliday junction (HJ) DNA during genetic recombination and DNA repair. Endonuclease that resolves HJ intermediates. Cleaves cruciform DNA by making single-stranded nicks across the HJ at symmetrical positions within the homologous arms, yielding a 5'-phosphate and a 3'-hydroxyl group; requires a central core of homology in the junction. The consensus cleavage sequence is 5'-(A/T)TT(C/G)-3'. Cleavage occurs on the 3'-side of the TT dinucleotide at the point of strand exchange. HJ branch migration catalyzed by RuvA-RuvB allows RuvC to scan DNA until it finds its consensus sequence, where it cleaves and resolves the cruciform DNA. This is Crossover junction endodeoxyribonuclease RuvC from Pseudoalteromonas atlantica (strain T6c / ATCC BAA-1087).